A 386-amino-acid polypeptide reads, in one-letter code: uncharacterized protein (386 aa).

At Lys185 the chain carries N6-(pyridoxal phosphate)lysine.

It belongs to the DegT/DnrJ/EryC1 family. Requires pyridoxal 5'-phosphate as cofactor.

This is an uncharacterized protein from Methanocaldococcus jannaschii (strain ATCC 43067 / DSM 2661 / JAL-1 / JCM 10045 / NBRC 100440) (Methanococcus jannaschii).